A 753-amino-acid chain; its full sequence is 5-methyltetrahydropteroyltriglutamate--homocysteine methyltransferase (753 aa).

5-methyltetrahydropteroyltri-L-glutamate-binding positions include 17-20 (RELK) and Lys117. L-homocysteine-binding positions include 431–433 (IGS) and Glu484. Residues 431–433 (IGS) and Glu484 each bind L-methionine. Residues 515–516 (RC) and Trp561 contribute to the 5-methyltetrahydropteroyltri-L-glutamate site. Asp599 contacts L-homocysteine. An L-methionine-binding site is contributed by Asp599. Glu605 provides a ligand contact to 5-methyltetrahydropteroyltri-L-glutamate. Zn(2+) contacts are provided by His641, Cys643, and Glu665. The active-site Proton donor is the His694. Cys726 contributes to the Zn(2+) binding site.

It belongs to the vitamin-B12 independent methionine synthase family. Zn(2+) serves as cofactor.

The enzyme catalyses 5-methyltetrahydropteroyltri-L-glutamate + L-homocysteine = tetrahydropteroyltri-L-glutamate + L-methionine. It participates in amino-acid biosynthesis; L-methionine biosynthesis via de novo pathway; L-methionine from L-homocysteine (MetE route): step 1/1. Catalyzes the transfer of a methyl group from 5-methyltetrahydrofolate to homocysteine resulting in methionine formation. This chain is 5-methyltetrahydropteroyltriglutamate--homocysteine methyltransferase, found in Enterobacter sp. (strain 638).